The primary structure comprises 887 residues: Alanine--tRNA ligase (887 aa).

Residues His564, His568, Cys676, and His680 each coordinate Zn(2+).

It belongs to the class-II aminoacyl-tRNA synthetase family. The cofactor is Zn(2+).

Its subcellular location is the cytoplasm. It catalyses the reaction tRNA(Ala) + L-alanine + ATP = L-alanyl-tRNA(Ala) + AMP + diphosphate. Its function is as follows. Catalyzes the attachment of alanine to tRNA(Ala) in a two-step reaction: alanine is first activated by ATP to form Ala-AMP and then transferred to the acceptor end of tRNA(Ala). Also edits incorrectly charged Ser-tRNA(Ala) and Gly-tRNA(Ala) via its editing domain. The chain is Alanine--tRNA ligase from Sinorhizobium medicae (strain WSM419) (Ensifer medicae).